Reading from the N-terminus, the 360-residue chain is Sphingolipid delta(4)-desaturase (360 aa).

Transmembrane regions (helical) follow at residues 67–87 (AVVLLQLSIAYALKNTPVLSF), 89–109 (FLALAYVVGATANQNCFLCIH), and 125–145 (LFAIWVNLPIGVPYSASFQPY). Positions 109–113 (HELSH) match the Histidine box-1 motif. The Histidine box-2 motif lies at 146-150 (HQLHH). 3 consecutive transmembrane segments (helical) span residues 170–190 (VLSSLLGKAFFATFQIFFYAL), 202–222 (FIHLLNVLVCLVSDFILIKFG), and 228–248 (WYLILSSFFAGSLHPTAGHFI). Positions 288–292 (HNEHH) match the Histidine box-3 motif.

Belongs to the fatty acid desaturase type 1 family. DEGS subfamily.

It localises to the membrane. The enzyme catalyses an N-acylsphinganine + 2 Fe(II)-[cytochrome b5] + O2 + 2 H(+) = an N-acylsphing-4-enine + 2 Fe(III)-[cytochrome b5] + 2 H2O. The protein operates within lipid metabolism; sphingolipid metabolism. Delta(4)-fatty-acid desaturase which introduces a double bond at the 4-position in the long-chain base (LCB) of ceramides. Required for the formation of the monounsaturated sphingoid base (E)-sphing-4-enine during glucosylceramide (GluCer) biosynthesis. The sequence is that of Sphingolipid delta(4)-desaturase from Komagataella phaffii (strain GS115 / ATCC 20864) (Yeast).